The chain runs to 702 residues: Elongation factor G (702 aa).

Residues 8–290 (TRYRNIGISA…AVIEYLPAPT (283 aa)) enclose the tr-type G domain. Residues 17 to 24 (AHIDAGKT), 88 to 92 (DTPGH), and 142 to 145 (NKMD) each bind GTP.

Belongs to the TRAFAC class translation factor GTPase superfamily. Classic translation factor GTPase family. EF-G/EF-2 subfamily.

Its subcellular location is the cytoplasm. In terms of biological role, catalyzes the GTP-dependent ribosomal translocation step during translation elongation. During this step, the ribosome changes from the pre-translocational (PRE) to the post-translocational (POST) state as the newly formed A-site-bound peptidyl-tRNA and P-site-bound deacylated tRNA move to the P and E sites, respectively. Catalyzes the coordinated movement of the two tRNA molecules, the mRNA and conformational changes in the ribosome. This is Elongation factor G from Erwinia tasmaniensis (strain DSM 17950 / CFBP 7177 / CIP 109463 / NCPPB 4357 / Et1/99).